We begin with the raw amino-acid sequence, 517 residues long: ATP synthase subunit alpha 1 (517 aa).

176 to 183 (GDRQTGKT) provides a ligand contact to ATP.

It belongs to the ATPase alpha/beta chains family. F-type ATPases have 2 components, CF(1) - the catalytic core - and CF(0) - the membrane proton channel. CF(1) has five subunits: alpha(3), beta(3), gamma(1), delta(1), epsilon(1). CF(0) has three main subunits: a(1), b(2) and c(9-12). The alpha and beta chains form an alternating ring which encloses part of the gamma chain. CF(1) is attached to CF(0) by a central stalk formed by the gamma and epsilon chains, while a peripheral stalk is formed by the delta and b chains.

Its subcellular location is the cell inner membrane. It catalyses the reaction ATP + H2O + 4 H(+)(in) = ADP + phosphate + 5 H(+)(out). Functionally, produces ATP from ADP in the presence of a proton gradient across the membrane. The alpha chain is a regulatory subunit. The chain is ATP synthase subunit alpha 1 from Shewanella frigidimarina (strain NCIMB 400).